Consider the following 415-residue polypeptide: Gamma-glutamyl phosphate reductase (415 aa).

The protein belongs to the gamma-glutamyl phosphate reductase family.

The protein resides in the cytoplasm. It catalyses the reaction L-glutamate 5-semialdehyde + phosphate + NADP(+) = L-glutamyl 5-phosphate + NADPH + H(+). Its pathway is amino-acid biosynthesis; L-proline biosynthesis; L-glutamate 5-semialdehyde from L-glutamate: step 2/2. Functionally, catalyzes the NADPH-dependent reduction of L-glutamate 5-phosphate into L-glutamate 5-semialdehyde and phosphate. The product spontaneously undergoes cyclization to form 1-pyrroline-5-carboxylate. This chain is Gamma-glutamyl phosphate reductase, found in Mycobacterium bovis (strain BCG / Pasteur 1173P2).